An 862-amino-acid polypeptide reads, in one-letter code: Rab GTPase-binding effector protein 1 (862 aa).

Ala-2 carries the post-translational modification N-acetylalanine. Residues 11–328 (DVSLQQRVAE…KDQEEDEQQR (318 aa)) adopt a coiled-coil conformation. At Lys-282 the chain carries N6-acetyllysine. Disordered regions lie at residues 315 to 340 (ELKK…KIDT) and 355 to 374 (EESS…THGS). Ser-374, Ser-377, and Ser-407 each carry phosphoserine. Residue Thr-408 is modified to Phosphothreonine. Residue Ser-410 is modified to Phosphoserine. A coiled-coil region spans residues 534–816 (DMCSNYEKQL…LQTELDVSEQ (283 aa)).

It belongs to the rabaptin family. Heterodimer with RABGEF1. The heterodimer binds RAB4A and RAB5A that have been activated by GTP-binding. Interacts with TSC2. Interacts with GGA1 (via GAE domain), GGA2 (via GAE domain) and GGA3 (via GAE domain). Interacts with AP1G1 (via GAE domain). Interacts with AP1G2 (via GAE domain). Interacts with ECPAS. Interacts with KCNH1. Interacts with PKD1 (via C-terminal domain) and GGA1; the interactions recruit PKD1:PKD2 complex to GGA1 and ARL3 at trans-Golgi network. Interacts with KCNH1. Post-translationally, proteolytic cleavage by caspases in apoptotic cells causes loss of endosome fusion activity.

It is found in the cytoplasm. It localises to the early endosome. The protein localises to the recycling endosome. The protein resides in the cytoplasmic vesicle. Its function is as follows. Rab effector protein acting as linker between gamma-adaptin, RAB4A and RAB5A. Involved in endocytic membrane fusion and membrane trafficking of recycling endosomes. Involved in KCNH1 channels trafficking to and from the cell membrane. Stimulates RABGEF1 mediated nucleotide exchange on RAB5A. Mediates the traffic of PKD1:PKD2 complex from the endoplasmic reticulum through the Golgi to the cilium. The polypeptide is Rab GTPase-binding effector protein 1 (Rabep1) (Rattus norvegicus (Rat)).